The sequence spans 312 residues: Ubiquinone biosynthesis O-methyltransferase, mitochondrial (312 aa).

Residues 1–32 (MLLRSRFLKVIHVRKQLSACSRFAIQTQTRCK) constitute a mitochondrion transit peptide. 4 residues coordinate S-adenosyl-L-methionine: Arg-68, Gly-130, Asp-153, and Met-196. Mg(2+) contacts are provided by Glu-197, Glu-200, and His-201.

This sequence belongs to the class I-like SAM-binding methyltransferase superfamily. UbiG/COQ3 family. Component of a multi-subunit COQ enzyme complex, composed of at least COQ3, COQ4, COQ5, COQ6, COQ7 and COQ9. Interacts directly with COQ4. Mg(2+) is required as a cofactor.

Its subcellular location is the mitochondrion inner membrane. It carries out the reaction 3,4-dihydroxy-5-(all-trans-hexaprenyl)benzoate + S-adenosyl-L-methionine = 4-hydroxy-3-methoxy-5-(all-trans-hexaprenyl)benzoate + S-adenosyl-L-homocysteine + H(+). It catalyses the reaction a 3-demethylubiquinone + S-adenosyl-L-methionine = a ubiquinone + S-adenosyl-L-homocysteine. The enzyme catalyses 3-demethylubiquinol-6 + S-adenosyl-L-methionine = ubiquinol-6 + S-adenosyl-L-homocysteine + H(+). Its pathway is cofactor biosynthesis; ubiquinone biosynthesis. Regulated in response to catabolite repression. Its function is as follows. O-methyltransferase required for two non-consecutive steps during ubiquinone biosynthesis. Catalyzes the 2 O-methylation of 3,4-dihydroxy-5-(all-trans-hexaprenyl)benzoic acid into 4-hydroxy-3-methoxy-5-(all-trans-hexaprenyl)benzoic acid. Also catalyzes the last step of ubiquinone biosynthesis by mediating methylation of 3-demethylubiquinone into ubiquinone. Also able to mediate the methylation of 3-demethylubiquinol-6 into ubiquinol-6. In Saccharomyces cerevisiae (strain ATCC 204508 / S288c) (Baker's yeast), this protein is Ubiquinone biosynthesis O-methyltransferase, mitochondrial.